A 63-amino-acid chain; its full sequence is Race-specific elicitor A9 (63 aa).

Positions 1–23 (MKLSLLSVELALLIATTLPLCWA) are cleaved as a signal peptide. Residues 24–35 (AALPVGLGVGLD) constitute a propeptide that is removed on maturation. 3 disulfides stabilise this stretch: Cys-37–Cys-51, Cys-41–Cys-54, and Cys-47–Cys-61.

In terms of biological role, this necrosis-inducing peptide induces a hypersensitive response on Cf-9 tomato genotypes. Race-specific elicitors are compounds which only induce defense responses in genotypes of host plants which are resistant to the pathogenic race that produces the elicitor, but not in susceptible genotypes. In Passalora fulva (Tomato leaf mold), this protein is Race-specific elicitor A9 (AVR9).